A 100-amino-acid chain; its full sequence is Small ribosomal subunit protein uS14c (100 aa).

The protein belongs to the universal ribosomal protein uS14 family. In terms of assembly, part of the 30S ribosomal subunit.

It is found in the plastid. Its subcellular location is the chloroplast. Functionally, binds 16S rRNA, required for the assembly of 30S particles. The protein is Small ribosomal subunit protein uS14c of Oltmannsiellopsis viridis (Marine flagellate).